The following is a 198-amino-acid chain: dCTP deaminase (198 aa).

Residues 110–115, Asp-128, 136–138, Tyr-171, Lys-178, and Gln-182 contribute to the dCTP site; these read RSSLAR and VLE. Glu-138 functions as the Proton donor/acceptor in the catalytic mechanism. Residues 168 to 198 form a disordered region; it reads ARPYNKREDAKYRDQKGAVASRISQDEKVNK. The span at 172–183 shows a compositional bias: basic and acidic residues; it reads NKREDAKYRDQK.

It belongs to the dCTP deaminase family. Homotrimer.

It carries out the reaction dCTP + H2O + H(+) = dUTP + NH4(+). Its pathway is pyrimidine metabolism; dUMP biosynthesis; dUMP from dCTP (dUTP route): step 1/2. In terms of biological role, catalyzes the deamination of dCTP to dUTP. The protein is dCTP deaminase of Colwellia psychrerythraea (strain 34H / ATCC BAA-681) (Vibrio psychroerythus).